A 175-amino-acid polypeptide reads, in one-letter code: Shikimate kinase (175 aa).

ATP is bound at residue G10 to T15. T14 serves as a coordination point for Mg(2+). Substrate contacts are provided by D32, R56, and G78. R116 lines the ATP pocket. R135 serves as a coordination point for substrate.

The protein belongs to the shikimate kinase family. Monomer. Mg(2+) is required as a cofactor.

Its subcellular location is the cytoplasm. The catalysed reaction is shikimate + ATP = 3-phosphoshikimate + ADP + H(+). The protein operates within metabolic intermediate biosynthesis; chorismate biosynthesis; chorismate from D-erythrose 4-phosphate and phosphoenolpyruvate: step 5/7. In terms of biological role, catalyzes the specific phosphorylation of the 3-hydroxyl group of shikimic acid using ATP as a cosubstrate. The chain is Shikimate kinase from Aromatoleum aromaticum (strain DSM 19018 / LMG 30748 / EbN1) (Azoarcus sp. (strain EbN1)).